Reading from the N-terminus, the 195-residue chain is Calcineurin B homologous protein 1 (195 aa).

Glycine 2 carries the N-myristoyl glycine lipid modification. The short motif at 2-6 is the Necessary for association with microtubule and interaction with GAPDH element; sequence GSRAS. EF-hand domains follow at residues 26–61, 71–106, 110–145, and 151–186; these read SQIT…AINP, FSEG…NGPE, SRSN…MVGV, and QLGS…VDVE. Ca(2+) contacts are provided by aspartate 123, aspartate 125, aspartate 127, lysine 129, and glutamate 134. The short motif at 138-147 is the Nuclear export signal 1 element; it reads VLRMMVGVNI. Positions 164, 166, 168, and 175 each coordinate Ca(2+). Positions 176-185 match the Nuclear export signal 2 motif; sequence FVKVLEKVDV.

The protein belongs to the calcineurin regulatory subunit family. CHP subfamily. In terms of assembly, monomer. Interacts with STK17B; the interaction occurs in a calcium-independent manner and induces the translocation of CHP1 from the Golgi to the nucleus. Interacts with GAPDH; the interaction is direct, occurs in a N-myristoylation-dependent manner and facilitates the ability of CHP1 to bind microtubules. Interacts with KIF1B (via the C-terminal end of the kinesin-motor domain); the interaction occurs in a calcium-dependent manner. Associates (via C-terminal domain) with microtubules; the association occurs with polymerized microtubules during the cell cycle in a myristoylation- and calcium-independent manner and is enhanced by GAPDH. Interacts with PPP3CA. Interacts with SLC9A1/NHE1 (via the cytoplasmic C-terminal domain); the interaction occurs at the plasma membrane in a calcium-dependent manner and at a domain that is critical for growth factor stimulation of the exchanger. Interacts with SLC9A3; increases SLC9A3 trafficking and activity at the plasma membrane. In terms of processing, phosphorylated; decreased phosphorylation is associated with an increase in SLC9A1/NHE1 Na(+)/H(+) exchange activity. Phosphorylation occurs in serum-dependent manner. The phosphorylation state may regulate the binding to SLC9A1/NHE1. Post-translationally, both N-myristoylation and calcium-mediated conformational changes are essential for its function in exocytic traffic. N-myristoylation is required for its association with microtubules and interaction with GAPDH, but not for the constitutive association to membranes.

It localises to the nucleus. The protein localises to the cytoplasm. The protein resides in the cytoskeleton. Its subcellular location is the endomembrane system. It is found in the endoplasmic reticulum-Golgi intermediate compartment. It localises to the endoplasmic reticulum. The protein localises to the cell membrane. The protein resides in the membrane. Functionally, calcium-binding protein involved in different processes such as regulation of vesicular trafficking, plasma membrane Na(+)/H(+) exchanger and gene transcription. Involved in the constitutive exocytic membrane traffic. Mediates the association between microtubules and membrane-bound organelles of the endoplasmic reticulum and Golgi apparatus and is also required for the targeting and fusion of transcytotic vesicles (TCV) with the plasma membrane. Functions as an integral cofactor in cell pH regulation by controlling plasma membrane-type Na(+)/H(+) exchange activity. Affects the pH sensitivity of SLC9A1/NHE1 by increasing its sensitivity at acidic pH. Required for the stabilization and localization of SLC9A1/NHE1 at the plasma membranes. Inhibits serum- and GTPase-stimulated Na(+)/H(+) exchange. Plays a role as an inhibitor of ribosomal RNA transcription by repressing the nucleolar UBF1 transcriptional activity. May sequester UBF1 in the nucleoplasm and limit its translocation to the nucleolus. Associates to the ribosomal gene promoter. Acts as a negative regulator of the calcineurin/NFAT signaling pathway. Inhibits NFAT nuclear translocation and transcriptional activity by suppressing the calcium-dependent calcineurin phosphatase activity. Also negatively regulates the kinase activity of the apoptosis-induced kinase STK17B. Inhibits both STK17B auto- and substrate-phosphorylations in a calcium-dependent manner. This chain is Calcineurin B homologous protein 1 (Chp1), found in Mus musculus (Mouse).